The chain runs to 104 residues: Large ribosomal subunit protein bL21 (104 aa).

The protein belongs to the bacterial ribosomal protein bL21 family. Part of the 50S ribosomal subunit. Contacts protein L20.

Its function is as follows. This protein binds to 23S rRNA in the presence of protein L20. This Helicobacter pylori (strain Shi470) protein is Large ribosomal subunit protein bL21.